The chain runs to 660 residues: Probable beta-hexosaminidase fdl (660 aa).

Residues 1–36 (MSLAVSLRRALLVLLTGAIFILTVLYWNQGVTKAQA) form the signal peptide. N-linked (GlcNAc...) asparagine glycosylation is found at N210, N412, and N452.

The protein belongs to the glycosyl hydrolase 20 family. As to expression, in third instar larval and early pupal brains, expressed in cells sending projections across the interhemispheric junction. In adult brain, expressed in mushroom body, ellipsoid body and pars intercerebralis.

The enzyme catalyses Hydrolysis of terminal non-reducing N-acetyl-D-hexosamine residues in N-acetyl-beta-D-hexosaminides.. Its function is as follows. Involved in brain restructurization via hormonal control during metamorphosis. Implicated in N-glycan processing. The chain is Probable beta-hexosaminidase fdl (fdl) from Drosophila melanogaster (Fruit fly).